Consider the following 263-residue polypeptide: 3-methyl-2-oxobutanoate hydroxymethyltransferase (263 aa).

Residues aspartate 45 and aspartate 84 each coordinate Mg(2+). Residues 45-46 (DS), aspartate 84, and lysine 112 contribute to the 3-methyl-2-oxobutanoate site. Residue glutamate 114 coordinates Mg(2+). The Proton acceptor role is filled by glutamate 180.

It belongs to the PanB family. As to quaternary structure, homodecamer; pentamer of dimers. It depends on Mg(2+) as a cofactor.

It is found in the cytoplasm. It carries out the reaction 3-methyl-2-oxobutanoate + (6R)-5,10-methylene-5,6,7,8-tetrahydrofolate + H2O = 2-dehydropantoate + (6S)-5,6,7,8-tetrahydrofolate. The protein operates within cofactor biosynthesis; (R)-pantothenate biosynthesis; (R)-pantoate from 3-methyl-2-oxobutanoate: step 1/2. Functionally, catalyzes the reversible reaction in which hydroxymethyl group from 5,10-methylenetetrahydrofolate is transferred onto alpha-ketoisovalerate to form ketopantoate. The chain is 3-methyl-2-oxobutanoate hydroxymethyltransferase from Klebsiella pneumoniae subsp. pneumoniae (strain ATCC 700721 / MGH 78578).